Here is a 330-residue protein sequence, read N- to C-terminus: MDTPLVTDDLDRTLAEQVLTLAEAARAADGVAPLSEHTLLRVRHGAPSGSSRFHLALEDGRAVGFAFVERVAGEPDSGEVVVHPDHRGRGHGTALLHSVDRDAGPDGVRVWAHGRTPQAVSVAREDGWTAVRELHKMRMPLRDIAGDEPGGPWEAPELPEPELRPEVAERVRLRPFVVGQDEQAWLAANARAFADHPEQGQLTLDDLLQREVEDWFDPDGFFLATAKDGGVAAFHWTKTHADGAGLTDGEPVGEVYVVGVDPEWQGSGLGRALTLAGLRHLRDAGLPWVHLYVDGDNEAAVRLYESLGFAMWDTDVMYAPPRDDAPRPNV.

2 N-acetyltransferase domains span residues L5–R142 and V171–P328. E36 contributes to the 1D-myo-inositol 2-(L-cysteinylamino)-2-deoxy-alpha-D-glucopyranoside binding site. V80 to V82 provides a ligand contact to acetyl-CoA. Residues R142–P161 form a disordered region. 3 residues coordinate 1D-myo-inositol 2-(L-cysteinylamino)-2-deoxy-alpha-D-glucopyranoside: E198, K238, and E254. Residues V258 to V260 and Q265 to R271 each bind acetyl-CoA. Position 292 (Y292) interacts with 1D-myo-inositol 2-(L-cysteinylamino)-2-deoxy-alpha-D-glucopyranoside. N297–R302 contributes to the acetyl-CoA binding site.

It belongs to the acetyltransferase family. MshD subfamily. As to quaternary structure, monomer.

It carries out the reaction 1D-myo-inositol 2-(L-cysteinylamino)-2-deoxy-alpha-D-glucopyranoside + acetyl-CoA = mycothiol + CoA + H(+). Its function is as follows. Catalyzes the transfer of acetyl from acetyl-CoA to desacetylmycothiol (Cys-GlcN-Ins) to form mycothiol. The chain is Mycothiol acetyltransferase from Nocardiopsis dassonvillei (strain ATCC 23218 / DSM 43111 / CIP 107115 / JCM 7437 / KCTC 9190 / NBRC 14626 / NCTC 10488 / NRRL B-5397 / IMRU 509) (Actinomadura dassonvillei).